The primary structure comprises 404 residues: Probable sugar efflux transporter (404 aa).

The next 12 helical transmembrane spans lie at 15 to 35 (VITFALAGFVFNTTEFIPVAL), 51 to 71 (GLIITVYAWVVSLMSLPFMLL), 85 to 105 (LVLFILSHLLSVIAWDFWVLV), 109 to 129 (IGVALTHSIFWAITASLVIRV), 137 to 157 (QAIGLLAIGCSLAMILGLPLG), 168 to 188 (ATFAIIALIAIGILCLFYQLL), 209 to 229 (PLLLGLYALTMIIISAHFTAY), 245 to 265 (SMATFVLFVFGLSGITASLLF), 276 to 296 (FILFSMGLLTATLLLLFIASQ), 299 to 319 (WTMFLLTFFWGIGIAGIGLGL), 333 to 353 (VAMAIYSGIYNIGIGAGALLG), and 363 to 383 (AYIGVAGALFAVFGLVLFILV).

This sequence belongs to the major facilitator superfamily. SotB (TC 2.A.1.2) family.

It localises to the cell inner membrane. Functionally, involved in the efflux of sugars. The physiological role may be the reduction of the intracellular concentration of toxic sugars or sugar metabolites. The sequence is that of Probable sugar efflux transporter from Pasteurella multocida (strain Pm70).